Consider the following 616-residue polypeptide: Zinc metalloproteinase-disintegrin-like protein H3 (616 aa).

The first 20 residues, 1 to 20, serve as a signal peptide directing secretion; that stretch reads MIQVLLVIICLAVFPYQGSS. A propeptide spanning residues 21–193 is cleaved from the precursor; sequence IILESGNVND…KKASQLNLTP (173 aa). Glu-194 bears the Pyrrolidone carboxylic acid (Glu) mark. The Peptidase M12B domain occupies 203–399; sequence KYIKLVIVAD…KMPQCILNKP (197 aa). 3 disulfides stabilise this stretch: Cys-314/Cys-394, Cys-354/Cys-378, and Cys-356/Cys-361. Residue His-339 participates in Zn(2+) binding. A Metal-binding motif is present at residues 339-350; it reads HEMGHNLGMDHD. The Proton acceptor role is filled by Glu-340. Residues His-343 and His-349 each contribute to the Zn(2+) site. N-linked (GlcNAc...) asparagine glycosylation is present at Asn-377. The Disintegrin domain maps to 407 to 493; that stretch reads PAVCGNYLVE…ECPTDQFQRN (87 aa). The Ca(2+) site is built by Val-409, Asn-412, Glu-416, Glu-419, and Asp-422. 14 disulfide bridges follow: Cys-410–Cys-439, Cys-421–Cys-434, Cys-423–Cys-429, Cys-433–Cys-456, Cys-447–Cys-453, Cys-452–Cys-478, Cys-465–Cys-485, Cys-472–Cys-504, Cys-497–Cys-509, Cys-516–Cys-566, Cys-531–Cys-577, Cys-544–Cys-554, Cys-561–Cys-603, and Cys-597–Cys-609. A D/ECD-tripeptide motif is present at residues 471–473; it reads ECD. Ca(2+) contacts are provided by Asp-473, Asp-476, and Asp-488. The N-linked (GlcNAc...) asparagine glycan is linked to Asn-506.

Belongs to the venom metalloproteinase (M12B) family. P-III subfamily. P-IIIc sub-subfamily. Homodimer; disulfide-linked. It depends on Zn(2+) as a cofactor. Post-translationally, N-glycosylated. The N-terminus is blocked. Expressed by the venom gland (at protein level). Expressed by the venom gland.

It localises to the secreted. Its activity is regulated as follows. The proteolytic activity requires Zn(2+) and Ca(2+) ions. The alpha-fibrinogenase activity is completely inhibited by EDTA, but not by PMSF. Zinc metalloprotease that has fibrinogenolytic and hemorrhagic activities. Cleaves insulin B chain readily at '38-Ala-|-Leu-39' bond, and at a significantly slower rate, at '40-Tyr-|-Leu-41' bond. Hydrolyzes isolated extracellular matrix (ECM) bovine fibronectin, and basal membrane (BM) proteins human collagen IV and, to a lesser extent, murine laminin, in vitro. Cleaves murine nidogen (at '350-Ser-|-Phe-351' and '380-Tyr-|-Asn-381' bonds), but not laminin, in a solubilized BM preparation. Hydrolyzes plasma proteins involved in blood coagulation in vitro. It significantly prolongs thrombin time. Has potent alpha-fibrinogenase activity cleaving human fibrinogen alpha chain at '432-Lys-|-Leu-433' bond, but does not cleave beta or gamma chains. Hydrolyzes bovine prothrombin, but does not cleave it at '366-Arg-|-Ile-367' bond, which is necessary for the formation of active alpha-thrombin, however, the cleavage of fragment 1 from it leads to reduced alpha-thrombin formation. Hydrolyzes bovine factor X heavy chain at '211-Ser-|-Leu-212', '213-Asp-|-Leu-214' and '216-Gly-|-Leu-217' bonds activating it only marginally as does not cleave at the physiological activation site. Does not cleave factor X light chain. No hydrolysis or activation of plasminogen. The alpha-fibrinogenase activity likely contributes to its hemorrhagic activity, which in rat can be completely neutralized in vivo by anti-ammodytagin antibodies, which strongly cross-react with this protein. Has very weak collagen-, ADP- and ristocetin-induced platelet aggregation inhibition activity in vitro. The polypeptide is Zinc metalloproteinase-disintegrin-like protein H3 (Vipera ammodytes ammodytes (Western sand viper)).